A 138-amino-acid polypeptide reads, in one-letter code: Transcription antitermination protein NusB (138 aa).

It belongs to the NusB family.

Its function is as follows. Involved in transcription antitermination. Required for transcription of ribosomal RNA (rRNA) genes. Binds specifically to the boxA antiterminator sequence of the ribosomal RNA (rrn) operons. This is Transcription antitermination protein NusB from Leptospira interrogans serogroup Icterohaemorrhagiae serovar copenhageni (strain Fiocruz L1-130).